Consider the following 169-residue polypeptide: uncharacterized protein (169 aa).

This is an uncharacterized protein from Autographa californica nuclear polyhedrosis virus (AcMNPV).